The primary structure comprises 545 residues: E3 ubiquitin-protein ligase ipaH9.8 (545 aa).

Positions 1–242 (MLPINNNFSL…YHGPRIYFSM (242 aa)) are interaction with target proteins. LRR repeat units lie at residues 57 to 77 (NSDE…NLPA), 78 to 99 (QITL…PVTL), 100 to 117 (KKLY…VLPP), 118 to 139 (ALES…PDSL), 140 to 157 (LTMN…SLPQ), 158 to 179 (ALKN…SEGN), 182 to 203 (VVRE…ILNL), and 205 to 228 (NECS…QRLT). The interval 243–250 (SDGQQNTL) is linker. The tract at residues 251–545 (HRPLADAVTA…SENGSQLHHS (295 aa)) is E3 ubiquitin-protein ligase catalytic domain. Positions 253–545 (PLADAVTAWF…SENGSQLHHS (293 aa)) constitute an NEL domain. The Glycyl thioester intermediate role is filled by Cys337.

Belongs to the LRR-containing bacterial E3 ligase family. Also interacts with human and mouse U2AF1 (U2AF35). Ubiquitinated in the presence of host E1 ubiquitin-activating enzyme, E2 ubiquitin-conjugating enzyme and ubiquitin.

The protein localises to the secreted. It is found in the host cytoplasm. The protein resides in the host nucleus. It catalyses the reaction S-ubiquitinyl-[E2 ubiquitin-conjugating enzyme]-L-cysteine + [acceptor protein]-L-lysine = [E2 ubiquitin-conjugating enzyme]-L-cysteine + N(6)-ubiquitinyl-[acceptor protein]-L-lysine.. Exists in an autoinhibited state in the absence of substrate protein, due to interactions of the leucine-rich repeats with NEL domain. Is activated upon binding to a substrate protein. Functionally, effector E3 ubiquitin ligase that interferes with host's ubiquitination pathway and modulates the acute inflammatory responses, thus facilitating bacterial colonization within the host cell. Interacts with IKBKG (NEMO) and TNIP1 (ABIN-1), a ubiquitin-binding adapter protein, which results in TNIP1-dependent 'Lys-27'-linked polyubiquitination of IKBKG. Consequently, polyubiquitinated IKBKG undergoes proteasome-dependent degradation, which perturbs NF-kappa-B activation during bacterial infection. Mediates polyubiquitination of host U2AF1, leading to its proteasomal degradation. Catalyzes 'Lys-48'-linked polyubiquitination and subsequent degradation of a subset of host guanylate-binding proteins (GBP1, GBP2, GBP4 and GBP6), thereby suppressing host cell defense. In contrast, host GBP3 and GBP7 are not ubiquitinated by IpaH9.8. Uses UBE2D2 (UBCH5B) as an E2 ubiquitin-conjugating enzyme. This Shigella sonnei (strain Ss046) protein is E3 ubiquitin-protein ligase ipaH9.8 (ipaH9.8).